A 3132-amino-acid chain; its full sequence is Toxin CdiA (3132 aa).

Positions methionine 1–alanine 32 form a signal peptide, signal. Positions proline 36–threonine 322 are two-partner system transport domain (TPS). The FHA-1 stretch occupies residues glycine 351–asparagine 1378. The interval serine 1379 to serine 1635 is receptor-binding domain (RBD). A YP domain region spans residues tyrosine 1636–asparagine 1820. The segment at glycine 1821–asparagine 1859 is periplasmic FHA-1 repeat (pFR). The segment at arginine 1930 to glutamine 2526 is FHA-2. Disordered regions lie at residues threonine 2195–glycine 2228 and alanine 2456–glutamine 2497. Polar residues-rich tracts occupy residues glycine 2217–glycine 2228 and valine 2483–glutamine 2497. The tract at residues aspartate 2862–serine 2904 is pre-toxin (PT) domain. The VENN CT cleavage motif signature appears at valine 2905 to asparagine 2908. Residues alanine 2909–glutamate 3121 are C-terminal effector domain (CT).

It in the N-terminal section; belongs to the CdiA toxin family. In terms of assembly, probably interacts with cognate immunity protein CdiI. Expressed as 303 kDa protein which can be processed to 284 kDa and 195 kDa forms.

The protein resides in the secreted. It is found in the target cell. Its subcellular location is the target cell cytoplasm. Functionally, toxic component of a toxin-immunity protein module, which functions as a cellular contact-dependent growth inhibition (CDI) system. CDI modules allow bacteria to communicate with and inhibit the growth of closely related neighboring bacteria (target cell counts decrease 1000- to 10(5)-fold) in a contact-dependent fashion. Inhibitory cells must be in logarithmic (not stationary) phase to inhibit growth of their targets, but protein synthesis is not necessary. The presence of P or S but not type 1 pili protects the target cells against growth inhibition for this CDI. BamA on the outer membrane of target cells acts as a receptor for CdiA, while target cell multidrug efflux pump AcrB facilitates its transport into the cytoplasm. Outer membrane receptor function is dependent on extracellular loops of BamA. Cells undergoing CDI show a 2- to 5-fold reversible decrease in aerobic respiration, proton motive force and steady-state ATP levels, suggesting this CT module is an ionophore that disrupts the target cell's inner cell membrane. Growth recovery requires an energy source. Cells expressing this protein in the absence of CdiI initially form filaments, some of which contain multiple nucleoids, while others are devoid of nucleoids. CDI cells induce the phage shock response, but pspA is not required for recovery from CDI. CDI is neutralized by its cognate immunity protein CdiI, but not by non-cognate CdiI from other bacteria with different CDI systems. Plays a role in biofilm formation, a region N-terminal to residue 644 is implicated in this receptor-independent cell adhesion. Its function is as follows. The CdiA protein is thought to be exported from the cell through the central lumen of CdiB, the other half of its two-partner system (TPS). The TPS domain probably remains associated with CdiB while the FHA-1 domain forms an extended filament (33 nm long) with the receptor-binding domain (RBD) at its extremity; in the secretion arrested state the C-terminus of the RBD and YP domains form a hairpin-like structure as the FHA-2, PT and CT domains are periplasmic. The YP domain is probably responsible for this arrest at the point where it re-enters the host cell periplasm. Upon binding to a target cell outer membrane receptor (BamA for this CDI) a signal is transmitted to activate secretion. The filament becomes about 5 nm longer, the rest of CdiA is secreted and the FHA-2 domain becomes stably associated with the target cell's outer membrane where it facilitates entry of the toxic CT domain into the target cell periplasm. From there the toxic CT domain is cleaved and gains access to the target cell cytoplasm via an inner membrane protein (multidrug efflux pump AcrB for this CDI). The protein is Toxin CdiA of Escherichia coli.